The chain runs to 98 residues: Defensin-A (98 aa).

An N-terminal signal peptide occupies residues 1–18 (MKSITVICFLALCTVAIT). Residues 19 to 58 (SAYPQEPVLADEARPFANSLFDELPEETYQAAVENFRLKR) constitute a propeptide that is removed on maturation. 3 cysteine pairs are disulfide-bonded: Cys-61–Cys-88, Cys-74–Cys-94, and Cys-78–Cys-96.

This sequence belongs to the invertebrate defensin family. Type 1 subfamily.

It is found in the secreted. Functionally, antibacterial peptide mostly active against Gram-positive bacteria. Has activity against the bacteria Gram-negative E.cloacae beta12. In Aedes aegypti (Yellowfever mosquito), this protein is Defensin-A (DEFA).